A 59-amino-acid chain; its full sequence is Potassium channel toxin alpha-KTx 15.5 (59 aa).

An N-terminal signal peptide occupies residues 1 to 22; sequence MKFSSIILLTLLICSMSIFGNC. Position 23 is a pyrrolidone carboxylic acid (Gln23). Disulfide bonds link Cys30–Cys50, Cys35–Cys55, and Cys39–Cys57.

The protein belongs to the short scorpion toxin superfamily. Potassium channel inhibitor family. Alpha-KTx 15 subfamily. In terms of tissue distribution, expressed by the venom gland.

Its subcellular location is the secreted. Blocker of A-type voltage-gated potassium channels of cerebellar granular cells. May also inhibit Kv4/KCND when coexpressed with DPP6 or DPP10. The occlusion of the outer entry of the K(+) conducting pore is partially reversible and affects both open and closed channels. It shares the same target in rat brain than BmTX3 (AC Q8I0L5) and AmmTX3 (AC P60208). In Androctonus australis (Sahara scorpion), this protein is Potassium channel toxin alpha-KTx 15.5.